Here is a 331-residue protein sequence, read N- to C-terminus: Probable tRNA pseudouridine synthase B (331 aa).

The segment covering 1 to 15 (MRCSQREVFVKREEP) has biased composition (basic and acidic residues). The segment at 1-27 (MRCSQREVFVKREEPTNPEWGKPPSQR) is disordered. Asp-71 serves as the catalytic Nucleophile. The PUA domain maps to 238-313 (LPKIWVRDSA…AVVRTDRVVM (76 aa)).

This sequence belongs to the pseudouridine synthase TruB family. Type 2 subfamily.

It carries out the reaction uridine(55) in tRNA = pseudouridine(55) in tRNA. Its function is as follows. Could be responsible for synthesis of pseudouridine from uracil-55 in the psi GC loop of transfer RNAs. This Pyrobaculum arsenaticum (strain DSM 13514 / JCM 11321 / PZ6) protein is Probable tRNA pseudouridine synthase B.